A 225-amino-acid chain; its full sequence is UPF0173 metal-dependent hydrolase Tneu_1348 (225 aa).

It belongs to the UPF0173 family.

The protein is UPF0173 metal-dependent hydrolase Tneu_1348 of Pyrobaculum neutrophilum (strain DSM 2338 / JCM 9278 / NBRC 100436 / V24Sta) (Thermoproteus neutrophilus).